Reading from the N-terminus, the 920-residue chain is Bifunctional aspartokinase/homoserine dehydrogenase 1, chloroplastic (920 aa).

Residues 1–21 (MRSLTVASRHPGAAFSTRRRP) are disordered. A chloroplast-targeting transit peptide spans 1–92 (MRSLTVASRH…EAIADLPKGD (92 aa)). Positions 93–341 (MWSVHKFGGT…VSEAVILSTL (249 aa)) are aspartokinase. The interface stretch occupies residues 342-566 (SYQEAWEMSY…LSKTTLAVGI (225 aa)). ACT domains follow at residues 416–491 (VEGT…VIHN) and 497–574 (TVGL…LIGR). A homoserine dehydrogenase region spans residues 567-920 (IGPGLIGRTL…RLSSYLGAPS (354 aa)). NAD(+) contacts are provided by I572 and A601. I572 contacts NADP(+). Residue I572 coordinates NADPH. Positions 604, 653, and 677 each coordinate NADP(+). T653 contributes to the NAD(+) binding site. NADPH is bound by residues T653 and K677. Na(+) is bound by residues E704, V707, A709, and L711. The NADP(+) site is built by G762 and E765. L-homoserine contacts are provided by E765 and D776. The active-site Proton donor is K780. Residue G897 participates in NAD(+) binding. G897 contributes to the NADP(+) binding site. G897 contributes to the NADPH binding site.

It in the N-terminal section; belongs to the aspartokinase family. The protein in the C-terminal section; belongs to the homoserine dehydrogenase family. In terms of assembly, homo- or heterodimer. It depends on a metal cation as a cofactor.

It localises to the plastid. The protein resides in the chloroplast. It carries out the reaction L-homoserine + NADP(+) = L-aspartate 4-semialdehyde + NADPH + H(+). The catalysed reaction is L-homoserine + NAD(+) = L-aspartate 4-semialdehyde + NADH + H(+). The enzyme catalyses L-aspartate + ATP = 4-phospho-L-aspartate + ADP. The protein operates within amino-acid biosynthesis; L-lysine biosynthesis via DAP pathway; (S)-tetrahydrodipicolinate from L-aspartate: step 1/4. Its pathway is amino-acid biosynthesis; L-methionine biosynthesis via de novo pathway; L-homoserine from L-aspartate: step 1/3. It functions in the pathway amino-acid biosynthesis; L-methionine biosynthesis via de novo pathway; L-homoserine from L-aspartate: step 3/3. It participates in amino-acid biosynthesis; L-threonine biosynthesis; L-threonine from L-aspartate: step 1/5. The protein operates within amino-acid biosynthesis; L-threonine biosynthesis; L-threonine from L-aspartate: step 3/5. Bifunctional aspartate kinase and homoserine dehydrogenase that catalyzes the first and the third steps toward the synthesis of lysine, methionine and threonine from aspartate. The protein is Bifunctional aspartokinase/homoserine dehydrogenase 1, chloroplastic (AKHSDH1) of Zea mays (Maize).